Consider the following 426-residue polypeptide: Serine--tRNA ligase (426 aa).

The interval 44–67 is disordered; sequence TEKQALQSERNATSKQIGMLKKKG. The segment covering 47–59 has biased composition (polar residues); it reads QALQSERNATSKQ. 231–233 contacts L-serine; it reads TAE. Residues 262-264 and Val-278 contribute to the ATP site; that span reads RRE. Glu-285 serves as a coordination point for L-serine. 349 to 352 is an ATP binding site; it reads EVSS. Ser-384 contacts L-serine.

This sequence belongs to the class-II aminoacyl-tRNA synthetase family. Type-1 seryl-tRNA synthetase subfamily. As to quaternary structure, homodimer. The tRNA molecule binds across the dimer.

It is found in the cytoplasm. The catalysed reaction is tRNA(Ser) + L-serine + ATP = L-seryl-tRNA(Ser) + AMP + diphosphate + H(+). It catalyses the reaction tRNA(Sec) + L-serine + ATP = L-seryl-tRNA(Sec) + AMP + diphosphate + H(+). It participates in aminoacyl-tRNA biosynthesis; selenocysteinyl-tRNA(Sec) biosynthesis; L-seryl-tRNA(Sec) from L-serine and tRNA(Sec): step 1/1. Functionally, catalyzes the attachment of serine to tRNA(Ser). Is also able to aminoacylate tRNA(Sec) with serine, to form the misacylated tRNA L-seryl-tRNA(Sec), which will be further converted into selenocysteinyl-tRNA(Sec). This is Serine--tRNA ligase from Akkermansia muciniphila (strain ATCC BAA-835 / DSM 22959 / JCM 33894 / BCRC 81048 / CCUG 64013 / CIP 107961 / Muc).